The following is a 173-amino-acid chain: Crossover junction endodeoxyribonuclease RuvC (173 aa).

Catalysis depends on residues Asp-8, Glu-67, and Asp-139. 3 residues coordinate Mg(2+): Asp-8, Glu-67, and Asp-139.

It belongs to the RuvC family. As to quaternary structure, homodimer which binds Holliday junction (HJ) DNA. The HJ becomes 2-fold symmetrical on binding to RuvC with unstacked arms; it has a different conformation from HJ DNA in complex with RuvA. In the full resolvosome a probable DNA-RuvA(4)-RuvB(12)-RuvC(2) complex forms which resolves the HJ. The cofactor is Mg(2+).

It is found in the cytoplasm. It carries out the reaction Endonucleolytic cleavage at a junction such as a reciprocal single-stranded crossover between two homologous DNA duplexes (Holliday junction).. Its function is as follows. The RuvA-RuvB-RuvC complex processes Holliday junction (HJ) DNA during genetic recombination and DNA repair. Endonuclease that resolves HJ intermediates. Cleaves cruciform DNA by making single-stranded nicks across the HJ at symmetrical positions within the homologous arms, yielding a 5'-phosphate and a 3'-hydroxyl group; requires a central core of homology in the junction. The consensus cleavage sequence is 5'-(A/T)TT(C/G)-3'. Cleavage occurs on the 3'-side of the TT dinucleotide at the point of strand exchange. HJ branch migration catalyzed by RuvA-RuvB allows RuvC to scan DNA until it finds its consensus sequence, where it cleaves and resolves the cruciform DNA. The sequence is that of Crossover junction endodeoxyribonuclease RuvC from Enterobacter sp. (strain 638).